The primary structure comprises 64 residues: Alpha-conotoxin-like Ac1.1a (64 aa).

The signal sequence occupies residues 1 to 21 (MGMRMMFTLFLLVVLTTTVVS). The propeptide occupies 22-47 (YPSDSASDGRDDEAKDERSDMYELKR). Disulfide bonds link Cys-51–Cys-56 and Cys-52–Cys-62. Position 62 is a cysteine amide (Cys-62).

Belongs to the conotoxin A superfamily. In terms of tissue distribution, expressed by the venom duct.

It localises to the secreted. Functionally, alpha-conotoxins act on postsynaptic membranes, they bind to the nicotinic acetylcholine receptors (nAChR) and thus inhibit them. The polypeptide is Alpha-conotoxin-like Ac1.1a (Conus achatinus (Little frog cone)).